Reading from the N-terminus, the 594-residue chain is Protein TRANSPORT INHIBITOR RESPONSE 1 (594 aa).

The region spanning 3-50 (KRIALSFPEEVLEHVFSFIQLDKDRNSVSLVCKSWYEIERWCRRKVFI) is the F-box domain. Residue K74 coordinates 1D-myo-inositol hexakisphosphate. The interaction with auxin-responsive proteins stretch occupies residues 81-82 (DF). Residues 113-114 (KR) and R344 contribute to the 1D-myo-inositol hexakisphosphate site. Residues 347–352 (PSEPFV) form an interaction with auxin-responsive proteins region. 401-403 (RFR) lines the 1D-myo-inositol hexakisphosphate pocket. A (indol-3-yl)acetate-binding site is contributed by R403. The interaction with auxin-responsive proteins stretch occupies residues 405 to 409 (CIIEP). Residue R436 participates in 1D-myo-inositol hexakisphosphate binding. 438 to 439 (SL) provides a ligand contact to (indol-3-yl)acetate. The interval 464–465 (AF) is interaction with auxin-responsive proteins. 1D-myo-inositol hexakisphosphate contacts are provided by residues 484-485 (RK) and R509.

As to quaternary structure, interacts with auxin. Part of a SCF E3 ubiquitin ligase complex SCF(TIR1) composed of SKP1, CUL1, RBX1 and TIR1. SCF(TIR1) interacts with the COP9 signalosome (CSN) complex. Interacts with Aux/IAA proteins (IAA3, IAA7, IAA12 and IAA17) in an auxin-dependent manner. The interaction with IAA3, a negative regulator of auxin responses, is promoted by auxin, but repressed by juglon (5-hydroxy-1,4-naphthoquinone). Interactions with auxin-responsive proteins is inactivated by auxin antagonists. In terms of tissue distribution, expressed in roots, stems, leaves and flowers. In adult plants, mostly expressed in floral stigma, anther filaments, abscission zones and vascular tissues.

Its subcellular location is the nucleus. Its pathway is protein modification; protein ubiquitination. In terms of biological role, auxin receptor that mediates Aux/IAA proteins proteasomal degradation and auxin-regulated transcription. The SCF(TIR1) E3 ubiquitin ligase complex is involved in auxin-mediated signaling pathway that regulate root and hypocotyl growth, lateral root formation, cell elongation, and gravitropism. Appears to allow pericycle cells to overcome G2 arrest prior to lateral root development. Plays a role in ethylene signaling in roots. Confers sensitivity to the virulent bacterial pathogen P.syringae. This chain is Protein TRANSPORT INHIBITOR RESPONSE 1 (TIR1), found in Arabidopsis thaliana (Mouse-ear cress).